The sequence spans 174 residues: UPF0398 protein YfdB (174 aa).

This sequence belongs to the UPF0398 family.

The polypeptide is UPF0398 protein YfdB (yfdB) (Lactococcus lactis subsp. lactis (strain IL1403) (Streptococcus lactis)).